A 111-amino-acid chain; its full sequence is Prostatic steroid-binding protein C1 (111 aa).

Residues 1–23 (MSTIKLSLCLLIMLAVCCYEANA) form the signal peptide.

The protein belongs to the secretoglobin family. Lipophilin subfamily. As to quaternary structure, prostatein is composed of three different peptides called C1, C2 and C3. These form covalent C1:C3 (F) and C2:C3 (S) heterodimers whose noncovalent association forms tetrameric (C1:C3/C3:C2) prostatein molecules.

The protein resides in the secreted. In terms of biological role, part of prostatein which is the major secretory glycoprotein of ventral prostate gland. This Rattus norvegicus (Rat) protein is Prostatic steroid-binding protein C1 (Psbpc1).